A 128-amino-acid polypeptide reads, in one-letter code: MYDNLKSLGITNPEEIDRYSLRQEANNDILKIYFQKDKGEFFAKRVKFKYPRQRKTVVADGVGQGYKEVQEISPNLRYIIDELDQICQRDRSEVDLKRKILDDLRHLESVVTNKISEIEADLEKLTRK.

Belongs to the UPF0325 family.

The chain is UPF0325 protein YaeH from Escherichia coli (strain ATCC 8739 / DSM 1576 / NBRC 3972 / NCIMB 8545 / WDCM 00012 / Crooks).